A 248-amino-acid polypeptide reads, in one-letter code: Tryptophan synthase alpha chain (248 aa).

Active-site proton acceptor residues include Glu-36 and Asp-47.

This sequence belongs to the TrpA family. Tetramer of two alpha and two beta chains.

It carries out the reaction (1S,2R)-1-C-(indol-3-yl)glycerol 3-phosphate + L-serine = D-glyceraldehyde 3-phosphate + L-tryptophan + H2O. The protein operates within amino-acid biosynthesis; L-tryptophan biosynthesis; L-tryptophan from chorismate: step 5/5. Functionally, the alpha subunit is responsible for the aldol cleavage of indoleglycerol phosphate to indole and glyceraldehyde 3-phosphate. The sequence is that of Tryptophan synthase alpha chain from Archaeoglobus fulgidus (strain ATCC 49558 / DSM 4304 / JCM 9628 / NBRC 100126 / VC-16).